Here is a 251-residue protein sequence, read N- to C-terminus: uncharacterized protein (251 aa).

It to M.jannaschii MJ0638 and MJ1123 and M.tuberculosis Rv2003c.

This is an uncharacterized protein from Methanocaldococcus jannaschii (strain ATCC 43067 / DSM 2661 / JAL-1 / JCM 10045 / NBRC 100440) (Methanococcus jannaschii).